Reading from the N-terminus, the 380-residue chain is Cytochrome b (380 aa).

4 helical membrane passes run 34–54 (FGSL…FLAM), 78–99 (WLLR…YCHI), 114–134 (WNVG…GYVL), and 179–199 (FFAF…IDLV). Heme b-binding residues include His-84 and His-98. His-183 is a binding site for heme b. An a ubiquinone-binding site is contributed by His-202. The next 4 membrane-spanning stretches (helical) occupy residues 227-247 (TKDT…ALLF), 289-309 (LGGV…PLLN), 321-341 (LSQA…WIGS), and 348-369 (FVLI…GFPL).

Belongs to the cytochrome b family. As to quaternary structure, the main subunits of complex b-c1 are: cytochrome b, cytochrome c1 and the Rieske protein. It depends on heme b as a cofactor.

It is found in the mitochondrion inner membrane. Its function is as follows. Component of the ubiquinol-cytochrome c reductase complex (complex III or cytochrome b-c1 complex) that is part of the mitochondrial respiratory chain. The b-c1 complex mediates electron transfer from ubiquinol to cytochrome c. Contributes to the generation of a proton gradient across the mitochondrial membrane that is then used for ATP synthesis. This chain is Cytochrome b (MT-CYB), found in Paracentrotus lividus (Common sea urchin).